The following is a 706-amino-acid chain: Kinesin-like protein KIF2A (706 aa).

The globular stretch occupies residues methionine 1 to aspartate 217. A disordered region spans residues leucine 66 to isoleucine 139. A Phosphoserine modification is found at serine 75. 2 positions are modified to phosphothreonine: threonine 78 and threonine 97. Serine 100 is modified (phosphoserine). Lysine 102 carries the N6-acetyllysine modification. Over residues phenylalanine 123–isoleucine 139 the composition is skewed to polar residues. Phosphoserine is present on residues serine 135 and serine 140. The disordered stretch occupies residues lysine 165 to glutamine 186. One can recognise a Kinesin motor domain in the interval arginine 223 to leucine 553. Position 313-320 (glycine 313–threonine 320) interacts with ATP. A phosphoserine mark is found at aspartate 556 and glutamine 573. Residues alanine 660–asparagine 699 adopt a coiled-coil conformation.

The protein belongs to the TRAFAC class myosin-kinesin ATPase superfamily. Kinesin family. MCAK/KIF2 subfamily. Interacts with AURKA and PLK1. Interacts with PSRC1. Interacts with MCRS1; the interaction enhances recruitment of KIF2A to the minus ends of spindle microtubules which promotes chromosome alignment.

The protein resides in the cytoplasm. The protein localises to the cytoskeleton. Its subcellular location is the microtubule organizing center. It is found in the centrosome. It localises to the spindle pole. The protein resides in the spindle. Functionally, plus end-directed microtubule-dependent motor required for normal brain development. May regulate microtubule dynamics during axonal growth. Required for normal progression through mitosis. Required for normal congress of chromosomes at the metaphase plate. Required for normal spindle dynamics during mitosis. Promotes spindle turnover. Implicated in formation of bipolar mitotic spindles. Has microtubule depolymerization activity. In Homo sapiens (Human), this protein is Kinesin-like protein KIF2A (KIF2A).